The chain runs to 451 residues: FAD-dependent monooxygenase adrH (451 aa).

3 residues coordinate FAD: E39, G53, and R112. Y196 is an active-site residue. FAD contacts are provided by D288 and A301. A glycan (N-linked (GlcNAc...) asparagine) is linked at N385. Residues 426–446 traverse the membrane as a helical segment; sequence TLLWVSSLALFLFFPWLGSYL.

Belongs to the paxM FAD-dependent monooxygenase family. FAD is required as a cofactor.

The protein localises to the membrane. It participates in secondary metabolite biosynthesis; terpenoid biosynthesis. Its function is as follows. FAD-dependent monooxygenase; part of the gene cluster that mediates the biosynthesis of andrastins, meroterpenoid compounds that exhibit inhibitory activity against ras farnesyltransferase, suggesting that they could be promising leads for antitumor agents. The first step of the pathway is the synthesis of 3,5-dimethylorsellinic acid (DMOA) by the polyketide synthase adrD via condensation of one acetyl-CoA starter unit with 3 malonyl-CoA units and 2 methylations. DMAO is then converted to farnesyl-DMAO by the prenyltransferase adrG. The methyltransferase adrK catalyzes the methylation of the carboxyl group of farnesyl-DMAO to farnesyl-DMAO methyl ester which is further converted to epoxyfarnesyl-DMAO methyl ester by the FAD-dependent monooxygenase adrH. The terpene cyclase adrI then catalyzes the carbon skeletal rearrangement to generate the andrastin E, the first compound in the pathway having the andrastin scaffold, with the tetracyclic ring system. The post-cyclization tailoring enzymes adrF, adrE, adrJ, and adrA, are involved in the conversion of andrastin E into andrastin A. The short chain dehydrogenase adrF is responsible for the oxidation of the C-3 a hydroxyl group of andrastin E to yield the corresponding ketone, andrastin D. The ketoreductase adrE stereoselectively reduces the carbonyl moiety to reverse the stereochemistry of the C-3 position to yield andrastin F. The acetyltransferase adrJ is the acetyltransferase that attaches the acetyl group to the C-3 hydroxyl group of andrastin F to yield andrastin C. Finally, the cytochrome P450 monooxygenase adrA catalyzes two sequential oxidation reactions of the C-23 methyl group, to generate the corresponding alcohol andrastin B, and aldehyde andrastin A. The protein is FAD-dependent monooxygenase adrH of Penicillium rubens (strain ATCC 28089 / DSM 1075 / NRRL 1951 / Wisconsin 54-1255) (Penicillium chrysogenum).